A 108-amino-acid chain; its full sequence is Circadian clock oscillator protein KaiB (108 aa).

Belongs to the KaiB family. Homodimer, interacts with KaiC. The KaiABC complex composition changes during the circadian cycle to control KaiC phosphorylation. Complexes KaiC(6), KaiA(2-4):KaiC(6), KaiB(6):KaiC(6) and KaiC(6):KaiB(6):KaiA(12) are among the most important forms, many form cooperatively. Undergoes a major conformational rearrangment; in the free state forms homotetramers as a dimer of dimers. When bound to the CI domain of KaiC switches to a monomeric thioredoxin-fold (KaiB(fs)). KaiB(fs) binds CikA, leading it to dephosphorylate phospho-RpaA.

Functionally, key component of the KaiABC oscillator complex, which constitutes the main circadian regulator in cyanobacteria. Complex composition changes during the circadian cycle to control KaiC phosphorylation. KaiA stimulates KaiC autophosphorylation, while KaiB sequesters KaiA, leading to KaiC autodephosphorylation. Phospho-Ser-431 KaiC accumulation triggers binding of KaiB to form the KaiB(6):KaiC(6) complex, leading to changes in output regulators CikA and SasA. KaiB switches to a thioredoxin-like fold (KaiB(fs)) when bound to KaiC. KaiB(6):KaiC(6) formation exposes a site for KaiA binding that sequesters KaiA from KaiC, making the KaiC(6):KaiB(6):KaiA(12) complex that results in KaiC autodephosphorylation. Its function is as follows. A metamorphic protein which reversibly switches between an inactive tetrameric fold and a rare, thioredoxin-like monomeric fold (KaiB(fs)). KaiB(fs) binds phospho-KaiC, KaiA and CikA. KaiA and CikA compete for binding to KaiB(fs), and KaiB(fs) and SasA compete for binding to KaiC, thus the clock oscillator and output signal pathway are tightly coupled. The chain is Circadian clock oscillator protein KaiB from Nostoc sp. (strain PCC 7120 / SAG 25.82 / UTEX 2576).